Reading from the N-terminus, the 463-residue chain is MSTNQIILTDQGDNYVNVWSHVAQDLYNHYGETLYNSWFSKVNFIESSLNTVILCAPTNFVRDWIKSKYSMVILQLFQHYNNTIKSIEIITKELPGITQTVIALPTKTFADIGSSELNAENIFSTLDVRFTFDNFVVGAPNELAYAAARAVAESSGAVSESNPLFLYGGVGLGKTHLMHAIGWYIKQNNPSRKVIYMSAEKFMYQFVKALRNKEVISFKEKFRSVDVLMIDDIQFICGKDSTQEEFFHTFNTLIDNNRQMVISCDRSPSDLDNIEDRIKSRLGWGLVADVHSTTYELRLGILESKIEQMNVKIPKDVIDFLASKIVSNVRELEGALNKVIAHSNFTLKEITLENTQNILRDLLRSNERIITVEDIQKKVASRYNIKLSDMSSSRRLREVARPRQIAMYLSKALTPKSLADIGKKFGKKDHTTVMHAIKKVEELLENDIELREEINLLMKILQN.

The interval 1–83 (MSTNQIILTD…LQLFQHYNNT (83 aa)) is domain I, interacts with DnaA modulators. Positions 83 to 124 (TIKSIEIITKELPGITQTVIALPTKTFADIGSSELNAENIFS) are domain II. Positions 125 to 343 (TLDVRFTFDN…GALNKVIAHS (219 aa)) are domain III, AAA+ region. 4 residues coordinate ATP: G171, G173, K174, and T175. A domain IV, binds dsDNA region spans residues 344–463 (NFTLKEITLE…INLLMKILQN (120 aa)).

It belongs to the DnaA family. As to quaternary structure, oligomerizes as a right-handed, spiral filament on DNA at oriC.

The protein resides in the cytoplasm. Functionally, plays an essential role in the initiation and regulation of chromosomal replication. ATP-DnaA binds to the origin of replication (oriC) to initiate formation of the DNA replication initiation complex once per cell cycle. Binds the DnaA box (a 9 base pair repeat at the origin) and separates the double-stranded (ds)DNA. Forms a right-handed helical filament on oriC DNA; dsDNA binds to the exterior of the filament while single-stranded (ss)DNA is stabiized in the filament's interior. The ATP-DnaA-oriC complex binds and stabilizes one strand of the AT-rich DNA unwinding element (DUE), permitting loading of DNA polymerase. After initiation quickly degrades to an ADP-DnaA complex that is not apt for DNA replication. Binds acidic phospholipids. The protein is Chromosomal replication initiator protein DnaA of Rickettsia massiliae (strain Mtu5).